Here is a 95-residue protein sequence, read N- to C-terminus: Secretoglobin family 1C member 1 (95 aa).

The first 23 residues, 1–23 (MKGSSALLLVALSLLCVCGLTRA), serve as a signal peptide directing secretion.

This sequence belongs to the secretoglobin family.

It localises to the secreted. This is Secretoglobin family 1C member 1 (Scgb1c1) from Mus musculus (Mouse).